The sequence spans 502 residues: L-arabinose isomerase (502 aa).

4 residues coordinate Mn(2+): glutamate 307, glutamate 334, histidine 351, and histidine 450.

The protein belongs to the arabinose isomerase family. Requires Mn(2+) as cofactor.

The enzyme catalyses beta-L-arabinopyranose = L-ribulose. It functions in the pathway carbohydrate degradation; L-arabinose degradation via L-ribulose; D-xylulose 5-phosphate from L-arabinose (bacterial route): step 1/3. Catalyzes the conversion of L-arabinose to L-ribulose. In Nocardioides sp. (strain ATCC BAA-499 / JS614), this protein is L-arabinose isomerase.